We begin with the raw amino-acid sequence, 243 residues long: Carboxy-S-adenosyl-L-methionine synthase (243 aa).

Residues Y39, 64–66 (GCS), N132, and R199 contribute to the S-adenosyl-L-methionine site.

It belongs to the class I-like SAM-binding methyltransferase superfamily. Cx-SAM synthase family. As to quaternary structure, homodimer.

The enzyme catalyses prephenate + S-adenosyl-L-methionine = carboxy-S-adenosyl-L-methionine + 3-phenylpyruvate + H2O. Catalyzes the conversion of S-adenosyl-L-methionine (SAM) to carboxy-S-adenosyl-L-methionine (Cx-SAM). This chain is Carboxy-S-adenosyl-L-methionine synthase, found in Alteromonas mediterranea (strain DSM 17117 / CIP 110805 / LMG 28347 / Deep ecotype).